Reading from the N-terminus, the 183-residue chain is Small ribosomal subunit protein uS4c (183 aa).

The region spanning 82–143 (MRLDNILFRL…KQRSKALIQN (62 aa)) is the S4 RNA-binding domain.

The protein belongs to the universal ribosomal protein uS4 family. As to quaternary structure, part of the 30S ribosomal subunit. Contacts protein S5. The interaction surface between S4 and S5 is involved in control of translational fidelity.

Its subcellular location is the plastid. It localises to the chloroplast. Its function is as follows. One of the primary rRNA binding proteins, it binds directly to 16S rRNA where it nucleates assembly of the body of the 30S subunit. Functionally, with S5 and S12 plays an important role in translational accuracy. This chain is Small ribosomal subunit protein uS4c (rps4), found in Freesia sp. (strain Lejeune 1997).